A 98-amino-acid polypeptide reads, in one-letter code: NADH-ubiquinone oxidoreductase chain 4L (98 aa).

The next 3 helical transmembrane spans lie at 1-21, 29-49, and 61-81; these read MPFIYINTALAYSMSLLGLLI, SLLCLEGMMLSLFIMMTTMTL, and IILLVFAACEAAVGLALLILI.

Belongs to the complex I subunit 4L family. In terms of assembly, core subunit of respiratory chain NADH dehydrogenase (Complex I) which is composed of 45 different subunits.

It localises to the mitochondrion inner membrane. It catalyses the reaction a ubiquinone + NADH + 5 H(+)(in) = a ubiquinol + NAD(+) + 4 H(+)(out). Its function is as follows. Core subunit of the mitochondrial membrane respiratory chain NADH dehydrogenase (Complex I) which catalyzes electron transfer from NADH through the respiratory chain, using ubiquinone as an electron acceptor. Part of the enzyme membrane arm which is embedded in the lipid bilayer and involved in proton translocation. This Cebus albifrons (White-fronted capuchin) protein is NADH-ubiquinone oxidoreductase chain 4L (MT-ND4L).